A 196-amino-acid chain; its full sequence is Protein TEX261 (196 aa).

The next 5 membrane-spanning stretches (helical) occupy residues Phe3–Val23, Ser42–Phe62, Ile70–Ile90, Phe97–Glu117, and Val125–Ser145.

The protein belongs to the SVP26 family. As to expression, detected in testis.

The protein localises to the membrane. This is Protein TEX261 (Tex261) from Mus musculus (Mouse).